The sequence spans 176 residues: Crossover junction endodeoxyribonuclease RuvC (176 aa).

Residues aspartate 7, glutamate 68, and aspartate 141 contribute to the active site. Mg(2+)-binding residues include aspartate 7, glutamate 68, and aspartate 141.

Belongs to the RuvC family. As to quaternary structure, homodimer which binds Holliday junction (HJ) DNA. The HJ becomes 2-fold symmetrical on binding to RuvC with unstacked arms; it has a different conformation from HJ DNA in complex with RuvA. In the full resolvosome a probable DNA-RuvA(4)-RuvB(12)-RuvC(2) complex forms which resolves the HJ. Requires Mg(2+) as cofactor.

It is found in the cytoplasm. The enzyme catalyses Endonucleolytic cleavage at a junction such as a reciprocal single-stranded crossover between two homologous DNA duplexes (Holliday junction).. Its function is as follows. The RuvA-RuvB-RuvC complex processes Holliday junction (HJ) DNA during genetic recombination and DNA repair. Endonuclease that resolves HJ intermediates. Cleaves cruciform DNA by making single-stranded nicks across the HJ at symmetrical positions within the homologous arms, yielding a 5'-phosphate and a 3'-hydroxyl group; requires a central core of homology in the junction. The consensus cleavage sequence is 5'-(A/T)TT(C/G)-3'. Cleavage occurs on the 3'-side of the TT dinucleotide at the point of strand exchange. HJ branch migration catalyzed by RuvA-RuvB allows RuvC to scan DNA until it finds its consensus sequence, where it cleaves and resolves the cruciform DNA. The protein is Crossover junction endodeoxyribonuclease RuvC of Streptomyces avermitilis (strain ATCC 31267 / DSM 46492 / JCM 5070 / NBRC 14893 / NCIMB 12804 / NRRL 8165 / MA-4680).